The sequence spans 245 residues: Thiopurine S-methyltransferase (245 aa).

29–40 (WREKWVDGKIGF) is an S-adenosyl-L-methionine binding site. Residue Phe-40 coordinates substrate. Lys-58 carries the N6-acetyllysine modification. 3 residues coordinate S-adenosyl-L-methionine: Leu-69, Glu-90, and Arg-152.

It belongs to the class I-like SAM-binding methyltransferase superfamily. TPMT family. Monomer.

It localises to the cytoplasm. It catalyses the reaction S-adenosyl-L-methionine + a thiopurine = S-adenosyl-L-homocysteine + a thiopurine S-methylether.. This chain is Thiopurine S-methyltransferase (TPMT), found in Lynx rufus (Bobcat).